We begin with the raw amino-acid sequence, 750 residues long: MTISPPEQEASVKIVVDRDPVKTSFERWAKPGHFSRTLAKGPNTTTWIWNLHADAHDFDSHTNDLEDISRKVFSAHFGQLAVIFIWLSGMYFHGARFSNYEAWLSDPTHIKPSAQVVWPIVGQEILNGDVGGGFQGIQITSGFFQLWRASGITSELQLYSTAIGGLVMAGLMLFAGWFHYHKAAPKLEWFQNVESMLNHHLAGLLGLGSLSWAGHQIHVSLPINKLLDAGVDPKEIPLPHEFLVNRDLTAQLFPSFAKGLTPFFTLNWAEYSDFLTFKGGLNPVTGGLWLTDTAHHHLAIAVLFLVAGHMYRTNWGIGHSIKEILEAHKGPFTGAGHRGLYEILTTSWHAQLAINLALFGSLSIIVAHHMYAMPPYPYLATDYGTQLSIFTHHTWIGGFCIVGGAAHAAIFMVRDYDPTNNYNNLLDRVIRHRDAIISHLNWVCIFLGFHSFGLYIHNDTMSALGRPQDMFSDTAIQLQPVFAQWIQNTHYLAPNLTAPNALAPTSATWGGDVVAVGGKVAMMPISLGTADFLVHHIHAFTIHVTVLILLKGVLFARSSRLIPDKVNLGFRFPCDGPGRGGTCQVSAWDHVFLGLFWMYNSLSIAIFHFSWKMQSDVWGSVTAKGVSHITGGNFAQSSITINGWLRDFLWAQASQVIQSYGSALSAYGLMFLGAHFVWAFSLMFLFSGRGYWQELIESIVWAHNKLKVAPAIQPRALSIIQGRAVGVAHYLLGGIATTWAFFLARIIAVG.

Helical transmembrane passes span 72-95 (VFSA…FHGA), 158-181 (LYST…FHYH), 197-221 (LNHH…HVSL), 293-311 (TAHH…GHMY), 348-371 (WHAQ…HHMY), 387-413 (LSIF…IFMV), 435-457 (AIIS…LYIH), and 532-550 (FLVH…LILL). Cys574 and Cys583 together coordinate [4Fe-4S] cluster. A run of 2 helical transmembrane segments spans residues 590 to 611 (HVFL…HFSW) and 664 to 686 (LSAY…MFLF). Chlorophyll a' is bound at residue His675. Positions 683 and 691 each coordinate chlorophyll a. Trp692 contacts phylloquinone. A helical membrane pass occupies residues 724–744 (AVGVAHYLLGGIATTWAFFLA).

Belongs to the PsaA/PsaB family. In terms of assembly, the PsaA/B heterodimer binds the P700 chlorophyll special pair and subsequent electron acceptors. PSI consists of a core antenna complex that captures photons, and an electron transfer chain that converts photonic excitation into a charge separation. The eukaryotic PSI reaction center is composed of at least 11 subunits. It depends on P700 is a chlorophyll a/chlorophyll a' dimer, A0 is one or more chlorophyll a, A1 is one or both phylloquinones and FX is a shared 4Fe-4S iron-sulfur center. as a cofactor.

It localises to the plastid. It is found in the chloroplast thylakoid membrane. It carries out the reaction reduced [plastocyanin] + hnu + oxidized [2Fe-2S]-[ferredoxin] = oxidized [plastocyanin] + reduced [2Fe-2S]-[ferredoxin]. PsaA and PsaB bind P700, the primary electron donor of photosystem I (PSI), as well as the electron acceptors A0, A1 and FX. PSI is a plastocyanin-ferredoxin oxidoreductase, converting photonic excitation into a charge separation, which transfers an electron from the donor P700 chlorophyll pair to the spectroscopically characterized acceptors A0, A1, FX, FA and FB in turn. Oxidized P700 is reduced on the lumenal side of the thylakoid membrane by plastocyanin. The polypeptide is Photosystem I P700 chlorophyll a apoprotein A1 (Chlorokybus atmophyticus (Soil alga)).